Here is a 226-residue protein sequence, read N- to C-terminus: Phosphoribosylformylglycinamidine synthase subunit PurQ (226 aa).

The region spanning 2-226 is the Glutamine amidotransferase type-1 domain; it reads KFAVIQFPGS…LKNFLVTVKN (225 aa). C86 serves as the catalytic Nucleophile. Catalysis depends on residues H195 and E197.

In terms of assembly, part of the FGAM synthase complex composed of 1 PurL, 1 PurQ and 2 PurS subunits.

It localises to the cytoplasm. The catalysed reaction is N(2)-formyl-N(1)-(5-phospho-beta-D-ribosyl)glycinamide + L-glutamine + ATP + H2O = 2-formamido-N(1)-(5-O-phospho-beta-D-ribosyl)acetamidine + L-glutamate + ADP + phosphate + H(+). It carries out the reaction L-glutamine + H2O = L-glutamate + NH4(+). The protein operates within purine metabolism; IMP biosynthesis via de novo pathway; 5-amino-1-(5-phospho-D-ribosyl)imidazole from N(2)-formyl-N(1)-(5-phospho-D-ribosyl)glycinamide: step 1/2. Functionally, part of the phosphoribosylformylglycinamidine synthase complex involved in the purines biosynthetic pathway. Catalyzes the ATP-dependent conversion of formylglycinamide ribonucleotide (FGAR) and glutamine to yield formylglycinamidine ribonucleotide (FGAM) and glutamate. The FGAM synthase complex is composed of three subunits. PurQ produces an ammonia molecule by converting glutamine to glutamate. PurL transfers the ammonia molecule to FGAR to form FGAM in an ATP-dependent manner. PurS interacts with PurQ and PurL and is thought to assist in the transfer of the ammonia molecule from PurQ to PurL. The protein is Phosphoribosylformylglycinamidine synthase subunit PurQ of Lactococcus lactis subsp. cremoris (Streptococcus cremoris).